The sequence spans 260 residues: Putative cysteine-rich repeat secretory protein 23 (260 aa).

The first 31 residues, 1–31, serve as a signal peptide directing secretion; sequence MSSSFVYKSLFLVPILAVVAMQLSFVQSVLS. Gnk2-homologous domains lie at 38–136 and 142–254; these read YLHH…NISY and LPEQ…LYLF.

It belongs to the cysteine-rich repeat secretory protein family.

It localises to the secreted. In Arabidopsis thaliana (Mouse-ear cress), this protein is Putative cysteine-rich repeat secretory protein 23 (CRRSP23).